The following is a 930-amino-acid chain: Translation initiation factor IF-2 (930 aa).

A disordered region spans residues 27-342 (LGLDVKSHSS…APKPVTERKF (316 aa)). A compositionally biased stretch (low complexity) spans 52 to 103 (KAAAPQAPAEKPVAAQPSPQKTPAKEAAPVKAEPTEAKAAAQPEAKTETAAP). 2 stretches are compositionally biased toward basic and acidic residues: residues 112–128 (FKAE…ERRK) and 136–178 (QNKE…DGRR). Positions 183 to 195 (HQGFNGQKRQQPQ) are enriched in polar residues. Residues 218-245 (RSSEERFKQAQEAKEVMERQNRRKEQPK) show a composition bias toward basic and acidic residues. Positions 251–268 (PVQPAPAPSAPAANPSPA) are enriched in pro residues. Residues 280-297 (ARPDKKRDDFDREEEGPR) show a composition bias toward basic and acidic residues. Positions 302–318 (NRSSQNQVRNQRNSNWN) are enriched in low complexity. Residues 432–599 (ERPPVVTIMG…TVLLVAEIQE (168 aa)) enclose the tr-type G domain. Positions 441-448 (GHVDHGKT) are G1. 441–448 (GHVDHGKT) is a binding site for GTP. A G2 region spans residues 466-470 (GITQH). Positions 487-490 (DTPG) are G3. GTP-binding positions include 487 to 491 (DTPGH) and 541 to 544 (NKID). Positions 541 to 544 (NKID) are G4. The segment at 577–579 (SAK) is G5.

The protein belongs to the TRAFAC class translation factor GTPase superfamily. Classic translation factor GTPase family. IF-2 subfamily.

The protein resides in the cytoplasm. In terms of biological role, one of the essential components for the initiation of protein synthesis. Protects formylmethionyl-tRNA from spontaneous hydrolysis and promotes its binding to the 30S ribosomal subunits. Also involved in the hydrolysis of GTP during the formation of the 70S ribosomal complex. The polypeptide is Translation initiation factor IF-2 (Streptococcus sanguinis (strain SK36)).